We begin with the raw amino-acid sequence, 1037 residues long: Exportin-T (1037 aa).

This sequence belongs to the exportin family.

The protein localises to the nucleus. It localises to the cytoplasm. Its function is as follows. tRNA nucleus export receptor which facilitates tRNA translocation across the nuclear pore complex. Involved in pre-tRNA splicing, probably by affecting the interaction of pre-tRNA with splicing endonuclease. The chain is Exportin-T (los1) from Neosartorya fischeri (strain ATCC 1020 / DSM 3700 / CBS 544.65 / FGSC A1164 / JCM 1740 / NRRL 181 / WB 181) (Aspergillus fischerianus).